We begin with the raw amino-acid sequence, 161 residues long: MKKTSKKNNNFKIPGTELNSADAERGKEESQRNFVELLPLEVTYKIFSQLDIQSLCRASRTCTGWNCAIRNNDSLWKPHCLTIRAVCQREIDDDIKSGYTWRVILLRNYQKSKVKYEWLSGRYSNIRSPVNLPEKAMCPMDADTWGEILDAELEREVEKLQ.

The interval 1-25 is disordered; that stretch reads MKKTSKKNNNFKIPGTELNSADAER. The F-box domain occupies 32–79; that stretch reads RNFVELLPLEVTYKIFSQLDIQSLCRASRTCTGWNCAIRNNDSLWKPH.

In Mus musculus (Mouse), this protein is F-box only protein 48 (Fbxo48).